The primary structure comprises 301 residues: CPX chromosomal region candidate gene 1 protein (301 aa).

Residues 1–77 (MSYPTKEGSD…ENSELETEIQ (77 aa)) form a disordered region. Polar residues predominate over residues 44-60 (VETNPINREPGTATSQE).

As to expression, expressed in a variety of fetal tissues.

The polypeptide is CPX chromosomal region candidate gene 1 protein (CPXCR1) (Homo sapiens (Human)).